Reading from the N-terminus, the 492-residue chain is MPQVTKTNNENEFRLTRSKVQHQESISTIKNTTISNSQHKQQTQQQISSPPQVSVTSSEGVSHVNTRQYLGDVSNQYITNAKPTNKRKPLGGDNAPLQKQQHRPSRPIPIASDNNNNGSTSSSSNSSNNNNNDANRLASLAVPSRLPQKRQATESSTNLVEKLRVPQPEVGERSQSYHKKSRLIDYEWQDLDEEDNDDQLMVSEYVNEIFSYYYELETRMLPDPQYLFKQTLLKPRMRSILVDWLVEMHLKFKLLPESLFLAVNVMDRFMSVEVVQIDKLQLLATAALFTAAKNEEVFSPSVKNYAYFTDGSYTPEEVVQAEKYMLTILNFDLNYPNPMNFLRRISKADDYDVQSRTLGKYLLEITIVDYKFIGMRPSLCCASAMYLARLILGKLPVWNGNLIHYSGGYRISDMRECIELMFQYLIAPIEHDEFFKKYAMRKFMRASTLCRNWAKKFQASGRDLFDERLSTHRLTLEDDDEEEEIVVAEAEE.

The disordered stretch occupies residues 1–176 (MPQVTKTNNE…QPEVGERSQS (176 aa)). Polar residues predominate over residues 23 to 33 (QESISTIKNTT). Residues 34-58 (ISNSQHKQQTQQQISSPPQVSVTSS) show a composition bias toward low complexity. Positions 59-83 (EGVSHVNTRQYLGDVSNQYITNAKP) are enriched in polar residues. Positions 111–135 (ASDNNNNGSTSSSSNSSNNNNNDAN) are enriched in low complexity.

This sequence belongs to the cyclin family. Cyclin AB subfamily.

In terms of biological role, essential for the control of the cell cycle at the G2/M (mitosis) transition. Interacts with the CDC2 protein kinase to form MPF. G2/M cyclins accumulate steadily during G2 and are abruptly destroyed at mitosis. In Candida albicans (Yeast), this protein is G2/mitotic-specific cyclin CYB1 (CYB1).